Reading from the N-terminus, the 424-residue chain is Histidine--tRNA ligase (424 aa).

The protein belongs to the class-II aminoacyl-tRNA synthetase family. Homodimer.

It localises to the cytoplasm. The catalysed reaction is tRNA(His) + L-histidine + ATP = L-histidyl-tRNA(His) + AMP + diphosphate + H(+). The protein is Histidine--tRNA ligase of Shigella boydii serotype 18 (strain CDC 3083-94 / BS512).